A 421-amino-acid polypeptide reads, in one-letter code: U-box domain-containing protein 26 (421 aa).

A U-box domain is found at 13-87 (QIPYHFRCPI…QEWCVANRSN (75 aa)).

The catalysed reaction is S-ubiquitinyl-[E2 ubiquitin-conjugating enzyme]-L-cysteine + [acceptor protein]-L-lysine = [E2 ubiquitin-conjugating enzyme]-L-cysteine + N(6)-ubiquitinyl-[acceptor protein]-L-lysine.. It functions in the pathway protein modification; protein ubiquitination. In terms of biological role, functions as an E3 ubiquitin ligase. In Arabidopsis thaliana (Mouse-ear cress), this protein is U-box domain-containing protein 26 (PUB26).